The sequence spans 412 residues: Branched-chain alpha-ketoacid dehydrogenase kinase (412 aa).

The transit peptide at 1 to 30 (MILASVLRSGPGGGLPLRPLLGPALALRAR) directs the protein to the mitochondrion. Residue serine 31 is modified to Phosphoserine. Serine 52 is subject to Phosphoserine; by autocatalysis. The Histidine kinase domain occupies 159–404 (LDDHKDVVTL…DVYLRLRHID (246 aa)). N6-acetyllysine occurs at positions 192 and 233. ATP is bound by residues asparagine 279 and aspartate 315. Asparagine 279 is a binding site for Mg(2+). Residues valine 328, aspartate 330, and phenylalanine 333 each contribute to the K(+) site. The ATP site is built by threonine 334 and threonine 335. Residues serine 356 and serine 360 each carry the phosphoserine modification. Histidine 364, glycine 367, and leucine 370 together coordinate ATP. Glycine 367 is a K(+) binding site.

It belongs to the PDK/BCKDK protein kinase family. Homodimer. Homotetramer. Dimerizes through interaction of two opposing nucleotide-binding domains. Interacts with E2 component of the branched-chain alpha-ketoacid dehydrogenase (BCKDH) complex. Competes with BCKDK for binding to the E2 component; this interaction is modulated by branched-chain alpha-keto acids. At steady state, BCKDH holoenzyme contains BCKDK and BCKDHA is phosphorylated. In response to high levels of branched-chain alpha-keto acids, the inhibitory BCKDK is replaced by activating PPM1K leading to BCKDHA dephosphorylation and BCAA degradation. Autophosphorylated. As to expression, ubiquitous.

The protein localises to the mitochondrion matrix. It catalyses the reaction L-seryl-[3-methyl-2-oxobutanoate dehydrogenase] + ATP = O-phospho-L-seryl-[3-methyl-2-oxobutanoate dehydrogenase] + ADP + H(+). The catalysed reaction is L-seryl-[protein] + ATP = O-phospho-L-seryl-[protein] + ADP + H(+). Its pathway is protein modification. With respect to regulation, allosterically inhibited by certain thiazoles and thiophenes: thiazoles increase interaction with DBT/BCKDH-E2, whereas thiophenes reduce this interaction. Inhibited by 3,6- dichlorobenzo[b]thiophene-2-carboxylic acid (BT2). The ATP binding is mediated by both potassium and magnesium ions. Its function is as follows. Serine/threonine-protein kinase component of macronutrients metabolism. Forms a functional kinase and phosphatase pair with PPM1K, serving as a metabolic regulatory node that coordinates branched-chain amino acids (BCAAs) with glucose and lipid metabolism via two distinct phosphoprotein targets: mitochondrial BCKDHA subunit of the branched-chain alpha-ketoacid dehydrogenase (BCKDH) complex and cytosolic ACLY, a lipogenic enzyme of Krebs cycle. Phosphorylates and inactivates mitochondrial BCKDH complex a multisubunit complex consisting of three multimeric components each involved in different steps of BCAA catabolism: E1 composed of BCKDHA and BCKDHB, E2 core composed of DBT monomers, and E3 composed of DLD monomers. Associates with the E2 component of BCKDH complex and phosphorylates BCKDHA on Ser-337, leading to conformational changes that interrupt substrate channeling between E1 and E2 and inactivates the BCKDH complex. Phosphorylates ACLY on Ser-455 in response to changes in cellular carbohydrate abundance such as occurs during fasting to feeding metabolic transition. Refeeding stimulates MLXIPL/ChREBP transcription factor, leading to increased BCKDK to PPM1K expression ratio, phosphorylation and activation of ACLY that ultimately results in the generation of malonyl-CoA and oxaloacetate immediate substrates of de novo lipogenesis and glucogenesis, respectively. Recognizes phosphosites having SxxE/D canonical motif. This is Branched-chain alpha-ketoacid dehydrogenase kinase from Homo sapiens (Human).